Consider the following 242-residue polypeptide: Cytochrome c oxidase subunit 2 (242 aa).

Topologically, residues 1–30 (MSFYGSRYFGDIVHGELGKDLFRYHGFVMM) are mitochondrial intermembrane. Residues 31 to 47 (VAVAVLVFVMYMGCVIL) traverse the membrane as a helical segment. Topologically, residues 48 to 66 (FTKFSYRHFLNRQRLEFWW) are mitochondrial matrix. The helical transmembrane segment at 67–83 (TIVPMLMLVGLWXPSMI) threads the bilayer. Residues 84 to 242 (NLYYMEEVKR…YFVMWLEALN (159 aa)) are Mitochondrial intermembrane-facing. Residues histidine 176, cysteine 211, glutamate 213, cysteine 215, histidine 219, and methionine 222 each contribute to the Cu cation site. A Mg(2+)-binding site is contributed by glutamate 213.

It belongs to the cytochrome c oxidase subunit 2 family. In terms of assembly, component of the cytochrome c oxidase (complex IV, CIV), a multisubunit enzyme composed of a catalytic core of 3 subunits and several supernumerary subunits. The complex exists as a monomer or a dimer and forms supercomplexes (SCs) in the inner mitochondrial membrane with ubiquinol-cytochrome c oxidoreductase (cytochrome b-c1 complex, complex III, CIII). Cu cation serves as cofactor.

It localises to the mitochondrion inner membrane. It catalyses the reaction 4 Fe(II)-[cytochrome c] + O2 + 8 H(+)(in) = 4 Fe(III)-[cytochrome c] + 2 H2O + 4 H(+)(out). Functionally, component of the cytochrome c oxidase, the last enzyme in the mitochondrial electron transport chain which drives oxidative phosphorylation. The respiratory chain contains 3 multisubunit complexes succinate dehydrogenase (complex II, CII), ubiquinol-cytochrome c oxidoreductase (cytochrome b-c1 complex, complex III, CIII) and cytochrome c oxidase (complex IV, CIV), that cooperate to transfer electrons derived from NADH and succinate to molecular oxygen, creating an electrochemical gradient over the inner membrane that drives transmembrane transport and the ATP synthase. Cytochrome c oxidase is the component of the respiratory chain that catalyzes the reduction of oxygen to water. Electrons originating from reduced cytochrome c in the intermembrane space (IMS) are transferred via the dinuclear copper A center (CU(A)) of subunit 2 and heme A of subunit 1 to the active site in subunit 1, a binuclear center (BNC) formed by heme A3 and copper B (CU(B)). The BNC reduces molecular oxygen to 2 water molecules using 4 electrons from cytochrome c in the IMS and 4 protons from the mitochondrial matrix. In Mytilus edulis (Blue mussel), this protein is Cytochrome c oxidase subunit 2 (COII).